The sequence spans 187 residues: ECF RNA polymerase sigma factor SigK (187 aa).

Residues tyrosine 30–glutamine 96 are sigma-70 factor domain-2. Residues glutamate 53–glutamine 56 carry the Interaction with polymerase core subunit RpoC motif. The segment at cysteine 133–asparagine 182 is sigma-70 factor domain-4. Positions tyrosine 155–arginine 174 form a DNA-binding region, H-T-H motif.

It belongs to the sigma-70 factor family. ECF subfamily. Interacts transiently with the RNA polymerase catalytic core formed by RpoA, RpoB, RpoC and RpoZ (2 alpha, 1 beta, 1 beta' and 1 omega subunit) to form the RNA polymerase holoenzyme that can initiate transcription. Interacts (via sigma-70 factor domain 4) with anti-sigma-K factor RskA.

In terms of biological role, sigma factors are initiation factors that promote the attachment of RNA polymerase to specific initiation sites and are then released. Extracytoplasmic function (ECF) sigma factors are held in an inactive form by an anti-sigma factor until released by regulated intramembrane proteolysis. The polypeptide is ECF RNA polymerase sigma factor SigK (sigK) (Mycobacterium tuberculosis (strain ATCC 25177 / H37Ra)).